We begin with the raw amino-acid sequence, 2207 residues long: Genome polyprotein (2207 aa).

The N-myristoyl glycine; by host moiety is linked to residue Gly-2. Topologically, residues 2–1518 are cytoplasmic; that stretch reads GAQVSSQKVG…NINRAMTILQ (1517 aa). The interval 579–599 is amphipathic alpha-helix; sequence GLGDLIEGVVEGVTRNALTPL. A compositionally biased stretch (polar residues) spans 597–613; it reads TPLTPANNLPDTQSSGP. Disordered stretches follow at residues 597–620 and 628–647; these read TPLT…KETP and GATN…VIQK. Catalysis depends on for protease 2A activity residues His-899 and Asp-917. Zn(2+)-binding residues include Cys-934 and Cys-936. The active-site For protease 2A activity is the Cys-988. Zn(2+) contacts are provided by Cys-994 and His-996. The tract at residues 1126–1198 is membrane-binding; sequence GDSWLKKFTE…HQSCPSQEHQ (73 aa). An oligomerization region spans residues 1126–1264; that stretch reads GDSWLKKFTE…SPGTGKSVAT (139 aa). Positions 1147-1151 are RNA-binding; that stretch reads SNKIS. The 157-residue stretch at 1230-1386 folds into the SF3 helicase domain; the sequence is EHTINNYVQF…SEYSRDGKLN (157 aa). 1254–1261 serves as a coordination point for ATP; sequence GSPGTGKS. Residues Cys-1394, Cys-1397, Cys-1406, and Cys-1411 each contribute to the Zn(2+) site. The segment at 1394–1411 adopts a C4-type zinc-finger fold; sequence CKNCHHPANFKRCCPLVC. The tract at residues 1438–1445 is RNA-binding; it reads ERNRRSSI. An oligomerization region spans residues 1449 to 1454; that stretch reads MEALFQ. Residues 1519–1534 lie within the membrane without spanning it; the sequence is AVTTFAAVAGVVYVMY. At 1535–2207 the chain is on the cytoplasmic side; sequence KLFAGHQGAY…TLYRRWLDSF (673 aa). Position 1544 is an O-(5'-phospho-RNA)-tyrosine (Tyr-1544). The Peptidase C3 domain maps to 1564–1742; it reads GPGFDYAVAM…FAAALKRSYF (179 aa). Active-site for protease 3C activity residues include His-1603, Glu-1634, and Cys-1710. The region spanning 1973–2088 is the RdRp catalytic domain; sequence EKLFAFDYTG…SYPHEVDASL (116 aa). Asp-1979 and Asp-2074 together coordinate Mg(2+).

It belongs to the picornaviruses polyprotein family. Interacts with capsid protein VP1 and capsid protein VP3 to form heterotrimeric protomers. In terms of assembly, interacts with capsid protein VP0, and capsid protein VP3 to form heterotrimeric protomers. Interacts with human PVR. Five protomers subsequently associate to form pentamers which serve as building blocks for the capsid. Interacts with capsid protein VP2, capsid protein VP3 and capsid protein VP4 following cleavage of capsid protein VP0. As to quaternary structure, interacts with capsid protein VP1 and capsid protein VP3 in the mature capsid. Interacts with capsid protein VP0 and capsid protein VP1 to form heterotrimeric protomers. Five protomers subsequently associate to form pentamers which serve as building blocks for the capsid. Interacts with capsid protein VP4 in the mature capsid. Interacts with protein 2C; this interaction may be important for virion morphogenesis. In terms of assembly, interacts with capsid protein VP1 and capsid protein VP3. As to quaternary structure, homodimer. Homohexamer; forms a hexameric ring structure with 6-fold symmetry characteristic of AAA+ ATPases. Interacts (via N-terminus) with host RTN3 (via reticulon domain); this interaction is important for viral replication. Interacts with capsid protein VP3; this interaction may be important for virion morphogenesis. In terms of assembly, interacts with protein 3CD. As to quaternary structure, homodimer. Interacts with host GBF1. Interacts (via GOLD domain) with host ACBD3 (via GOLD domain); this interaction allows the formation of a viral protein 3A/ACBD3 heterotetramer with a 2:2 stoichiometry, which will stimulate the recruitment of host PI4KB in order to synthesize PI4P at the viral RNA replication sites. Interacts with RNA-directed RNA polymerase. In terms of assembly, interacts with protein 3AB and with RNA-directed RNA polymerase. As to quaternary structure, interacts with Viral protein genome-linked and with protein 3CD. Requires Mg(2+) as cofactor. Post-translationally, specific enzymatic cleavages in vivo by the viral proteases yield processing intermediates and the mature proteins. Myristoylation is required for the formation of pentamers during virus assembly. Further assembly of 12 pentamers and a molecule of genomic RNA generates the provirion. In terms of processing, during virion maturation, immature virions are rendered infectious following cleavage of VP0 into VP4 and VP2. This maturation seems to be an autocatalytic event triggered by the presence of RNA in the capsid and it is followed by a conformational change infectious virion. Post-translationally, myristoylation is required during RNA encapsidation and formation of the mature virus particle. VPg is uridylylated by the polymerase into VPg-pUpU. This acts as a nucleotide-peptide primer for the genomic RNA replication.

It localises to the virion. It is found in the host cytoplasm. Its subcellular location is the host cytoplasmic vesicle membrane. The protein localises to the host nucleus. It catalyses the reaction a ribonucleoside 5'-triphosphate + H2O = a ribonucleoside 5'-diphosphate + phosphate + H(+). The enzyme catalyses Selective cleavage of Tyr-|-Gly bond in the picornavirus polyprotein.. It carries out the reaction RNA(n) + a ribonucleoside 5'-triphosphate = RNA(n+1) + diphosphate. The catalysed reaction is Selective cleavage of Gln-|-Gly bond in the poliovirus polyprotein. In other picornavirus reactions Glu may be substituted for Gln, and Ser or Thr for Gly.. Its activity is regulated as follows. Replication or transcription is subject to high level of random mutations by the nucleotide analog ribavirin. Forms an icosahedral capsid of pseudo T=3 symmetry with capsid proteins VP2 and VP3. The capsid is 300 Angstroms in diameter, composed of 60 copies of each capsid protein and enclosing the viral positive strand RNA genome. Capsid protein VP1 mainly forms the vertices of the capsid. Capsid protein VP1 interacts with host cell receptor PVR to provide virion attachment to target host cells. This attachment induces virion internalization predominantly through clathrin- and caveolin-independent endocytosis in Hela cells and through caveolin-mediated endocytosis in brain microvascular endothelial cells. Tyrosine kinases are probably involved in the entry process. Virus binding to PVR induces increased junctional permeability and rearrangement of junctional proteins. Modulation of endothelial tight junctions, as well as cytolytic infection of endothelial cells themselves, may result in loss of endothelial integrity which may help the virus to reach the CNS. After binding to its receptor, the capsid undergoes conformational changes. Capsid protein VP1 N-terminus (that contains an amphipathic alpha-helix) and capsid protein VP4 are externalized. Together, they shape a pore in the host membrane through which viral genome is translocated to host cell cytoplasm. Its function is as follows. Forms an icosahedral capsid of pseudo T=3 symmetry with capsid proteins VP2 and VP3. The capsid is 300 Angstroms in diameter, composed of 60 copies of each capsid protein and enclosing the viral positive strand RNA genome. In terms of biological role, lies on the inner surface of the capsid shell. After binding to the host receptor, the capsid undergoes conformational changes. Capsid protein VP4 is released, Capsid protein VP1 N-terminus is externalized, and together, they shape a pore in the host membrane through which the viral genome is translocated into the host cell cytoplasm. Functionally, component of immature procapsids, which is cleaved into capsid proteins VP4 and VP2 after maturation. Allows the capsid to remain inactive before the maturation step. Cysteine protease that cleaves viral polyprotein and specific host proteins. It is responsible for the autocatalytic cleavage between the P1 and P2 regions, which is the first cleavage occurring in the polyprotein. Also cleaves the host translation initiation factor EIF4G1, in order to shut down the capped cellular mRNA translation. Inhibits the host nucleus-cytoplasm protein and RNA trafficking by cleaving host members of the nuclear pores including NUP98, NUP62 and NUP153. Counteracts stress granule formation probably by antagonizing its assembly or promoting its dissassembly. Cleaves and inhibits host IFIH1/MDA5, thereby inhibiting the type-I IFN production and the establishment of the antiviral state. Cleaves and inhibits host MAVS, thereby inhibiting the type-I IFN production and the establishment of the antiviral state. Its function is as follows. Plays an essential role in the virus replication cycle by acting as a viroporin. Creates a pore in the host endoplasmic reticulum and as a consequence releases Ca2+ in the cytoplasm of infected cell. In turn, high levels of cytoplasmic calcium may trigger membrane trafficking and transport of viral ER-associated proteins to viroplasms, sites of viral genome replication. In terms of biological role, induces and associates with structural rearrangements of intracellular membranes. Displays RNA-binding, nucleotide binding and NTPase activities. May play a role in virion morphogenesis and viral RNA encapsidation by interacting with the capsid protein VP3. Functionally, localizes the viral replication complex to the surface of membranous vesicles. Together with protein 3CD binds the Cis-Active RNA Element (CRE) which is involved in RNA synthesis initiation. Acts as a cofactor to stimulate the activity of 3D polymerase, maybe through a nucleid acid chaperone activity. Localizes the viral replication complex to the surface of membranous vesicles. It inhibits host cell endoplasmic reticulum-to-Golgi apparatus transport and causes the disassembly of the Golgi complex, possibly through GBF1 interaction. This would result in depletion of MHC, trail receptors and IFN receptors at the host cell surface. Plays an essential role in viral RNA replication by recruiting ACBD3 and PI4KB at the viral replication sites, thereby allowing the formation of the rearranged membranous structures where viral replication takes place. Its function is as follows. Acts as a primer for viral RNA replication and remains covalently bound to viral genomic RNA. VPg is uridylylated prior to priming replication into VPg-pUpU. The oriI viral genomic sequence may act as a template for this. The VPg-pUpU is then used as primer on the genomic RNA poly(A) by the RNA-dependent RNA polymerase to replicate the viral genome. During genome replication, the VPg-RNA linkage is removed by the host TDP2, thereby accelerating replication. During the late stage of the replication cycle, host TDP2 is excluded from sites of viral RNA synthesis and encapsidation, allowing for the generation of progeny virions. In terms of biological role, involved in the viral replication complex and viral polypeptide maturation. It exhibits protease activity with a specificity and catalytic efficiency that is different from protease 3C. Protein 3CD lacks polymerase activity. Protein 3CD binds to the 5'UTR of the viral genome. Functionally, major viral protease that mediates proteolytic processing of the polyprotein. Cleaves host EIF5B, contributing to host translation shutoff. Also cleaves host PABPC1, contributing to host translation shutoff. Cleaves host RIGI and thus contributes to the inhibition of type I interferon production. Cleaves host NLRP1, triggers host N-glycine-mediated degradation of the autoinhibitory NLRP1 N-terminal fragment. Inhibits the integrated stress response (ISR) in the infected cell by cleaving host G3BP1. Stress granule formation is thus inhibited, which allows protein synthesis and viral replication. Replicates the viral genomic RNA on the surface of intracellular membranes. May form linear arrays of subunits that propagate along a strong head-to-tail interaction called interface-I. Covalently attaches UMP to a tyrosine of VPg, which is used to prime RNA synthesis. The positive stranded RNA genome is first replicated at virus induced membranous vesicles, creating a dsRNA genomic replication form. This dsRNA is then used as template to synthesize positive stranded RNA genomes. ss(+)RNA genomes are either translated, replicated or encapsidated. The sequence is that of Genome polyprotein from Homo sapiens (Human).